Reading from the N-terminus, the 161-residue chain is NAD(P)H-quinone oxidoreductase subunit I, chloroplastic (161 aa).

2 consecutive 4Fe-4S ferredoxin-type domains span residues 55 to 84 (GRIH…VDWK) and 95 to 124 (LNYS…MTEE). Cys-64, Cys-67, Cys-70, Cys-74, Cys-104, Cys-107, Cys-110, and Cys-114 together coordinate [4Fe-4S] cluster.

The protein belongs to the complex I 23 kDa subunit family. In terms of assembly, NDH is composed of at least 16 different subunits, 5 of which are encoded in the nucleus. It depends on [4Fe-4S] cluster as a cofactor.

The protein resides in the plastid. It is found in the chloroplast thylakoid membrane. The enzyme catalyses a plastoquinone + NADH + (n+1) H(+)(in) = a plastoquinol + NAD(+) + n H(+)(out). It catalyses the reaction a plastoquinone + NADPH + (n+1) H(+)(in) = a plastoquinol + NADP(+) + n H(+)(out). NDH shuttles electrons from NAD(P)H:plastoquinone, via FMN and iron-sulfur (Fe-S) centers, to quinones in the photosynthetic chain and possibly in a chloroplast respiratory chain. The immediate electron acceptor for the enzyme in this species is believed to be plastoquinone. Couples the redox reaction to proton translocation, and thus conserves the redox energy in a proton gradient. This chain is NAD(P)H-quinone oxidoreductase subunit I, chloroplastic, found in Phaseolus vulgaris (Kidney bean).